Here is a 296-residue protein sequence, read N- to C-terminus: Diguanylate cyclase DgcS (296 aa).

A GGDEF domain is found at glycine 165–threonine 293. The Mg(2+) site is built by aspartate 173, leucine 174, and aspartate 216. Aspartate 216 is an active-site residue.

Requires Mg(2+) as cofactor.

It carries out the reaction 2 GTP = 3',3'-c-di-GMP + 2 diphosphate. In terms of biological role, catalyzes the synthesis of cyclic-di-GMP (c-di-GMP) via the condensation of 2 GTP molecules. May be involved in the regulation of formation of solid surface-associated biofilms and pellicles according to environmental conditions. This Shewanella oneidensis (strain ATCC 700550 / JCM 31522 / CIP 106686 / LMG 19005 / NCIMB 14063 / MR-1) protein is Diguanylate cyclase DgcS.